Here is a 429-residue protein sequence, read N- to C-terminus: Adenylosuccinate synthetase (429 aa).

Residues 12 to 18 (GDEGKGK) and 40 to 42 (GHT) each bind GTP. The active-site Proton acceptor is the Asp13. Mg(2+) is bound by residues Asp13 and Gly40. IMP-binding positions include 13–16 (DEGK), 38–41 (NAGH), Thr128, Arg142, Gln223, Thr238, and Arg302. The active-site Proton donor is His41. 298–304 (TTTGRPR) lines the substrate pocket. Residues Arg304, 330 to 332 (SID), and 412 to 414 (SVG) contribute to the GTP site.

Belongs to the adenylosuccinate synthetase family. In terms of assembly, homodimer. The cofactor is Mg(2+).

The protein resides in the cytoplasm. It carries out the reaction IMP + L-aspartate + GTP = N(6)-(1,2-dicarboxyethyl)-AMP + GDP + phosphate + 2 H(+). It functions in the pathway purine metabolism; AMP biosynthesis via de novo pathway; AMP from IMP: step 1/2. Its function is as follows. Plays an important role in the de novo pathway of purine nucleotide biosynthesis. Catalyzes the first committed step in the biosynthesis of AMP from IMP. This chain is Adenylosuccinate synthetase, found in Bacillus cytotoxicus (strain DSM 22905 / CIP 110041 / 391-98 / NVH 391-98).